We begin with the raw amino-acid sequence, 160 residues long: Ribosome maturation factor RimP (160 aa).

It belongs to the RimP family.

The protein resides in the cytoplasm. Functionally, required for maturation of 30S ribosomal subunits. This is Ribosome maturation factor RimP from Symbiobacterium thermophilum (strain DSM 24528 / JCM 14929 / IAM 14863 / T).